The primary structure comprises 680 residues: E3 ubiquitin-protein ligase brl2 (680 aa).

Residues Arg-44–Leu-72 adopt a coiled-coil conformation. The tract at residues Pro-206–Gln-233 is disordered. Basic and acidic residues predominate over residues Lys-210–Ser-229. Coiled-coil stretches lie at residues Leu-261–Lys-288, Met-353–Val-399, and Asp-485–Thr-609. The RING-type zinc finger occupies Cys-627 to Gly-667.

This sequence belongs to the BRE1 family. In terms of assembly, component of the histone H2B ubiquitin ligase complex (HULC) composed of at least brl1, brl2, rhp6 and shf1.

The protein resides in the nucleus. It catalyses the reaction S-ubiquitinyl-[E2 ubiquitin-conjugating enzyme]-L-cysteine + [acceptor protein]-L-lysine = [E2 ubiquitin-conjugating enzyme]-L-cysteine + N(6)-ubiquitinyl-[acceptor protein]-L-lysine.. It participates in protein modification; protein ubiquitination. Its function is as follows. E3 ubiquitin-protein ligase which belongs to the histone H2B ubiquitin ligase complex (HULC) which mediates monoubiquitination of histone H2B to form H2BK123ub1. H2BK123ub1 gives a specific tag for epigenetic transcriptional activation and is also a prerequisite for H3K4me and H3K79me formation. The polypeptide is E3 ubiquitin-protein ligase brl2 (brl2) (Schizosaccharomyces pombe (strain 972 / ATCC 24843) (Fission yeast)).